A 388-amino-acid polypeptide reads, in one-letter code: GTPase Obg (388 aa).

The Obg domain occupies 1-159 (MKFVDEANIR…RSIKLELLLL (159 aa)). The region spanning 160–333 (ADVGLLGMPN…LSIKMLDYIR (174 aa)) is the OBG-type G domain. Residues 166–173 (GMPNAGKS), 191–195 (FTTLV), 213–216 (DIPG), 283–286 (NKTD), and 314–316 (SAY) each bind GTP. Mg(2+) is bound by residues Ser173 and Thr193.

The protein belongs to the TRAFAC class OBG-HflX-like GTPase superfamily. OBG GTPase family. In terms of assembly, monomer. Mg(2+) is required as a cofactor.

It localises to the cytoplasm. Functionally, an essential GTPase which binds GTP, GDP and possibly (p)ppGpp with moderate affinity, with high nucleotide exchange rates and a fairly low GTP hydrolysis rate. Plays a role in control of the cell cycle, stress response, ribosome biogenesis and in those bacteria that undergo differentiation, in morphogenesis control. This chain is GTPase Obg, found in Shewanella frigidimarina (strain NCIMB 400).